Reading from the N-terminus, the 501-residue chain is ADP,ATP carrier protein 3 (501 aa).

The next 12 membrane-spanning stretches (helical) occupy residues L23–L43, I59–Y79, Y90–I110, Y146–W166, P183–F203, I227–F247, I293–A313, F326–I346, L361–I381, E383–I403, F446–T466, and I470–I490.

It belongs to the ADP/ATP translocase tlc family.

The protein resides in the cell membrane. Its function is as follows. Provides the rickettsial cell with host ATP in exchange for rickettsial ADP. This is an obligate exchange system. This energy acquiring activity is an important component of rickettsial parasitism. The protein is ADP,ATP carrier protein 3 (tlcC) of Rickettsia felis (strain ATCC VR-1525 / URRWXCal2) (Rickettsia azadi).